Consider the following 295-residue polypeptide: ATP synthase gamma chain (295 aa).

Belongs to the ATPase gamma chain family. In terms of assembly, F-type ATPases have 2 components, CF(1) - the catalytic core - and CF(0) - the membrane proton channel. CF(1) has five subunits: alpha(3), beta(3), gamma(1), delta(1), epsilon(1). CF(0) has three main subunits: a, b and c.

It localises to the cell inner membrane. Its function is as follows. Produces ATP from ADP in the presence of a proton gradient across the membrane. The gamma chain is believed to be important in regulating ATPase activity and the flow of protons through the CF(0) complex. This is ATP synthase gamma chain from Campylobacter curvus (strain 525.92).